Consider the following 943-residue polypeptide: UvrABC system protein A (943 aa).

32 to 39 contacts ATP; sequence GLSGSGKS. The C4-type zinc finger occupies 251–278; the sequence is CPVCGFTVPELEPRLFSFNAPFGSCSEC. ABC transporter domains follow at residues 308–589 and 609–937; these read WNPI…SKSI and GNGR…HYLK. Position 641 to 648 (641 to 648) interacts with ATP; that stretch reads GVSGSGKS. A C4-type zinc finger spans residues 740–766; that stretch reads CEACSGDGIIKIEMHFLPDVYVACEVC.

It belongs to the ABC transporter superfamily. UvrA family. In terms of assembly, forms a heterotetramer with UvrB during the search for lesions.

Its subcellular location is the cytoplasm. The UvrABC repair system catalyzes the recognition and processing of DNA lesions. UvrA is an ATPase and a DNA-binding protein. A damage recognition complex composed of 2 UvrA and 2 UvrB subunits scans DNA for abnormalities. When the presence of a lesion has been verified by UvrB, the UvrA molecules dissociate. The sequence is that of UvrABC system protein A from Streptococcus pneumoniae serotype 4 (strain ATCC BAA-334 / TIGR4).